Consider the following 321-residue polypeptide: Lipoyl synthase (321 aa).

The tract at residues Met1 to Tyr21 is disordered. [4Fe-4S] cluster-binding residues include Cys63, Cys68, Cys74, Cys89, Cys93, Cys96, and Ser302. One can recognise a Radical SAM core domain in the interval Trp75–Ser291. The disordered stretch occupies residues Ser301–Gly321. Residues His304–Arg314 are compositionally biased toward basic and acidic residues.

The protein belongs to the radical SAM superfamily. Lipoyl synthase family. [4Fe-4S] cluster is required as a cofactor.

Its subcellular location is the cytoplasm. The enzyme catalyses [[Fe-S] cluster scaffold protein carrying a second [4Fe-4S](2+) cluster] + N(6)-octanoyl-L-lysyl-[protein] + 2 oxidized [2Fe-2S]-[ferredoxin] + 2 S-adenosyl-L-methionine + 4 H(+) = [[Fe-S] cluster scaffold protein] + N(6)-[(R)-dihydrolipoyl]-L-lysyl-[protein] + 4 Fe(3+) + 2 hydrogen sulfide + 2 5'-deoxyadenosine + 2 L-methionine + 2 reduced [2Fe-2S]-[ferredoxin]. It functions in the pathway protein modification; protein lipoylation via endogenous pathway; protein N(6)-(lipoyl)lysine from octanoyl-[acyl-carrier-protein]: step 2/2. Functionally, catalyzes the radical-mediated insertion of two sulfur atoms into the C-6 and C-8 positions of the octanoyl moiety bound to the lipoyl domains of lipoate-dependent enzymes, thereby converting the octanoylated domains into lipoylated derivatives. The chain is Lipoyl synthase from Rubrobacter xylanophilus (strain DSM 9941 / JCM 11954 / NBRC 16129 / PRD-1).